The primary structure comprises 335 residues: Aspartate--ammonia ligase (335 aa).

The protein belongs to the class-II aminoacyl-tRNA synthetase family. AsnA subfamily.

Its subcellular location is the cytoplasm. The catalysed reaction is L-aspartate + NH4(+) + ATP = L-asparagine + AMP + diphosphate + H(+). It participates in amino-acid biosynthesis; L-asparagine biosynthesis; L-asparagine from L-aspartate (ammonia route): step 1/1. The sequence is that of Aspartate--ammonia ligase from Levilactobacillus brevis (strain ATCC 367 / BCRC 12310 / CIP 105137 / JCM 1170 / LMG 11437 / NCIMB 947 / NCTC 947) (Lactobacillus brevis).